Consider the following 171-residue polypeptide: Ribosome maturation factor RimM (171 aa).

Positions 97 to 169 (DGEFYYHEII…RVDVDIMEGL (73 aa)) constitute a PRC barrel domain.

The protein belongs to the RimM family. As to quaternary structure, binds ribosomal protein uS19.

Its subcellular location is the cytoplasm. An accessory protein needed during the final step in the assembly of 30S ribosomal subunit, possibly for assembly of the head region. Essential for efficient processing of 16S rRNA. May be needed both before and after RbfA during the maturation of 16S rRNA. It has affinity for free ribosomal 30S subunits but not for 70S ribosomes. In Lactococcus lactis subsp. cremoris (strain MG1363), this protein is Ribosome maturation factor RimM.